The primary structure comprises 156 residues: Glutamate-rich protein 2 (156 aa).

2 disordered regions span residues 29–66 (LQDI…TQAP) and 116–156 (EKTQ…EDGS). 2 stretches are compositionally biased toward acidic residues: residues 39–56 (SAED…DDED) and 140–156 (SDEE…EDGS).

The chain is Glutamate-rich protein 2 (ERICH2) from Homo sapiens (Human).